Reading from the N-terminus, the 401-residue chain is Imidazolonepropionase (401 aa).

Positions 70 and 72 each coordinate Fe(3+). Residues His-70 and His-72 each coordinate Zn(2+). 4-imidazolone-5-propanoate contacts are provided by Arg-79, Tyr-142, and His-175. Tyr-142 is an N-formimidoyl-L-glutamate binding site. His-238 serves as a coordination point for Fe(3+). His-238 lines the Zn(2+) pocket. Gln-241 is a binding site for 4-imidazolone-5-propanoate. Asp-313 is a Fe(3+) binding site. Residue Asp-313 coordinates Zn(2+). N-formimidoyl-L-glutamate-binding residues include Asn-315 and Gly-317. Residue Thr-318 participates in 4-imidazolone-5-propanoate binding.

This sequence belongs to the metallo-dependent hydrolases superfamily. HutI family. Requires Zn(2+) as cofactor. Fe(3+) is required as a cofactor.

It is found in the cytoplasm. The enzyme catalyses 4-imidazolone-5-propanoate + H2O = N-formimidoyl-L-glutamate. The protein operates within amino-acid degradation; L-histidine degradation into L-glutamate; N-formimidoyl-L-glutamate from L-histidine: step 3/3. In terms of biological role, catalyzes the hydrolytic cleavage of the carbon-nitrogen bond in imidazolone-5-propanoate to yield N-formimidoyl-L-glutamate. It is the third step in the universal histidine degradation pathway. The chain is Imidazolonepropionase from Xanthomonas campestris pv. campestris (strain 8004).